The sequence spans 499 residues: Glucosylglycerol-phosphate synthase (499 aa).

The protein belongs to the glycosyltransferase 20 family. As to quaternary structure, interacts with GGP-P. In terms of processing, seems to be degraded, at least in vitro, by FtsH2. In an ftsH2 disruption strain inactive GGPS accumulates.

The protein resides in the cytoplasm. The catalysed reaction is ADP-alpha-D-glucose + sn-glycerol 3-phosphate = 2-O-(alpha-D-glucopyranosyl)-sn-glycerol 3-phosphate + ADP + H(+). The protein operates within glycan metabolism; glucosylglycerol biosynthesis. Its function is as follows. Involved in salt tolerance by producing GG-phosphate from ADP-glucose and glycerol-3-phosphate (G3P), an intermediate in the synthesis of the osmolyte glucosylglycerol (GG). The polypeptide is Glucosylglycerol-phosphate synthase (ggpS) (Synechocystis sp. (strain ATCC 27184 / PCC 6803 / Kazusa)).